Consider the following 149-residue polypeptide: MEKTFIMLKPDAVQRGLVGQIIARFEAKGCKLVGMKLMSVDQALAEQHYAEHKGKSFFEPTVQYIMSSPVVAMVWEGKNVVALARELMGATNPANANPGSIRGSFGMDISRNVIHGSDSVASAEREIALYFRPEELCDYRKAGEEWLSE.

Residues Lys9, Phe57, Arg85, Thr91, Arg102, and Asn112 each coordinate ATP. The Pros-phosphohistidine intermediate role is filled by His115.

Belongs to the NDK family. In terms of assembly, homotetramer. The cofactor is Mg(2+).

The protein localises to the cytoplasm. The enzyme catalyses a 2'-deoxyribonucleoside 5'-diphosphate + ATP = a 2'-deoxyribonucleoside 5'-triphosphate + ADP. It catalyses the reaction a ribonucleoside 5'-diphosphate + ATP = a ribonucleoside 5'-triphosphate + ADP. Its function is as follows. Major role in the synthesis of nucleoside triphosphates other than ATP. The ATP gamma phosphate is transferred to the NDP beta phosphate via a ping-pong mechanism, using a phosphorylated active-site intermediate. This Desulfitobacterium hafniense (strain DSM 10664 / DCB-2) protein is Nucleoside diphosphate kinase.